Reading from the N-terminus, the 1009-residue chain is Cilia- and flagella-associated protein 70 (1009 aa).

Basic and acidic residues predominate over residues 410-428 (NLKEDKPVKEKDIDGRPRP). The disordered stretch occupies residues 410–457 (NLKEDKPVKEKDIDGRPRPGDVQAPSIKSQSSDTPLEGEPPLSHNPEG). TPR repeat units follow at residues 498 to 531 (PPLT…EYYR), 635 to 668 (SEQL…EPQN), 669 to 702 (LDHW…NQSH), 704 to 736 (HSLL…EPTN), 888 to 921 (HFIF…SPSC), 923 to 954 (TWLG…NNYN), and 956 to 988 (EVWA…KLKD).

Belongs to the CFAP70 family.

The protein resides in the cell projection. The protein localises to the cilium. Its subcellular location is the flagellum. It localises to the cytoplasm. It is found in the cytoskeleton. The protein resides in the flagellum basal body. The protein localises to the cilium axoneme. Functionally, axoneme-binding protein that plays a role in the regulation of ciliary motility and cilium length. The sequence is that of Cilia- and flagella-associated protein 70 from Macaca fascicularis (Crab-eating macaque).